Consider the following 208-residue polypeptide: Outer-membrane lipoprotein carrier protein (208 aa).

Residues Met-1–Ala-22 form the signal peptide.

It belongs to the LolA family. Monomer.

It localises to the periplasm. In terms of biological role, participates in the translocation of lipoproteins from the inner membrane to the outer membrane. Only forms a complex with a lipoprotein if the residue after the N-terminal Cys is not an aspartate (The Asp acts as a targeting signal to indicate that the lipoprotein should stay in the inner membrane). This Shewanella sediminis (strain HAW-EB3) protein is Outer-membrane lipoprotein carrier protein.